A 161-amino-acid chain; its full sequence is DNA-directed RNA polymerase 18 kDa subunit (161 aa).

The protein belongs to the poxviridae DNA-directed RNA polymerase 18 kDa subunit family. In terms of assembly, the DNA-dependent RNA polymerase used for intermediate and late genes expression consists of eight subunits Rpo30/OPG66, Rpo7/OPG90, Rpo22/OPG103, Rpo147/OPG105, Rpo18/OPG119, Rpo19/OPG131, Rpo132/OPG151 and Rpo35/OPG156. The same holoenzyme, with the addition of the transcription-specificity factor OPG109, is used for early gene expression.

It is found in the virion. It catalyses the reaction RNA(n) + a ribonucleoside 5'-triphosphate = RNA(n+1) + diphosphate. Its function is as follows. Part of the DNA-dependent RNA polymerase which catalyzes the transcription of viral DNA into RNA using the four ribonucleoside triphosphates as substrates. Responsible for the transcription of early, intermediate and late genes. DNA-dependent RNA polymerase associates with the early transcription factor (ETF), itself composed of OPG118 and OPG133, thereby allowing the early genes transcription. Late transcription, and probably also intermediate transcription, require newly synthesized RNA polymerase. The sequence is that of DNA-directed RNA polymerase 18 kDa subunit (OPG119) from Vaccinia virus (strain Ankara) (VACV).